A 473-amino-acid polypeptide reads, in one-letter code: Kynurenine 3-monooxygenase (473 aa).

The protein belongs to the aromatic-ring hydroxylase family. KMO subfamily. It depends on FAD as a cofactor.

It localises to the mitochondrion outer membrane. The catalysed reaction is L-kynurenine + NADPH + O2 + H(+) = 3-hydroxy-L-kynurenine + NADP(+) + H2O. It participates in cofactor biosynthesis; NAD(+) biosynthesis; quinolinate from L-kynurenine: step 1/3. Catalyzes the hydroxylation of L-kynurenine (L-Kyn) to form 3-hydroxy-L-kynurenine (L-3OHKyn). Required for synthesis of quinolinic acid. The chain is Kynurenine 3-monooxygenase from Debaryomyces hansenii (strain ATCC 36239 / CBS 767 / BCRC 21394 / JCM 1990 / NBRC 0083 / IGC 2968) (Yeast).